A 436-amino-acid polypeptide reads, in one-letter code: GTPase Der (436 aa).

EngA-type G domains follow at residues 4-167 and 175-351; these read PTVA…PNEI and IKFS…HAQN. GTP-binding positions include 10 to 17, 57 to 61, 119 to 122, 181 to 188, 229 to 233, and 294 to 297; these read GRPNVGKS, DTGGI, NKVD, DTAGM, and NKWD. The KH-like domain occupies 352–436; that stretch reads LRISSSVLND…PIHLIARKRK (85 aa).

The protein belongs to the TRAFAC class TrmE-Era-EngA-EngB-Septin-like GTPase superfamily. EngA (Der) GTPase family. Associates with the 50S ribosomal subunit.

Its function is as follows. GTPase that plays an essential role in the late steps of ribosome biogenesis. The polypeptide is GTPase Der (Lactococcus lactis subsp. cremoris (strain SK11)).